Consider the following 232-residue polypeptide: Phosphatidylserine decarboxylase proenzyme (232 aa).

Serine 190 serves as the catalytic Schiff-base intermediate with substrate; via pyruvic acid. At serine 190 the chain carries Pyruvic acid (Ser); by autocatalysis.

The protein belongs to the phosphatidylserine decarboxylase family. PSD-A subfamily. As to quaternary structure, heterodimer of a large membrane-associated beta subunit and a small pyruvoyl-containing alpha subunit. Pyruvate serves as cofactor. In terms of processing, is synthesized initially as an inactive proenzyme. Formation of the active enzyme involves a self-maturation process in which the active site pyruvoyl group is generated from an internal serine residue via an autocatalytic post-translational modification. Two non-identical subunits are generated from the proenzyme in this reaction, and the pyruvate is formed at the N-terminus of the alpha chain, which is derived from the carboxyl end of the proenzyme. The post-translation cleavage follows an unusual pathway, termed non-hydrolytic serinolysis, in which the side chain hydroxyl group of the serine supplies its oxygen atom to form the C-terminus of the beta chain, while the remainder of the serine residue undergoes an oxidative deamination to produce ammonia and the pyruvoyl prosthetic group on the alpha chain.

It localises to the cell membrane. It carries out the reaction a 1,2-diacyl-sn-glycero-3-phospho-L-serine + H(+) = a 1,2-diacyl-sn-glycero-3-phosphoethanolamine + CO2. The protein operates within phospholipid metabolism; phosphatidylethanolamine biosynthesis; phosphatidylethanolamine from CDP-diacylglycerol: step 2/2. Catalyzes the formation of phosphatidylethanolamine (PtdEtn) from phosphatidylserine (PtdSer). In Rhizobium johnstonii (strain DSM 114642 / LMG 32736 / 3841) (Rhizobium leguminosarum bv. viciae), this protein is Phosphatidylserine decarboxylase proenzyme.